The chain runs to 255 residues: MSVISMKQLLEAGVHFGHQTRRWNPKMKPYIFTERNGIHVIDLQKTEKLVDDAYNYVKNASQEGAVVLFVGTKKQAAEAVKEEALRAGQYYVNHRWLGGMLTNWNTIQTRVTRLKEINKMEEEGTFEVLPKKEVVLLNKERERLEKFIGGIADMPRIPDVMYIVDPHAEQIAVKEAKTLGIPVVAMVDTNADPEPIDVVIPANDDAIRAVKLITAKMADAIIEGRQGEDAAEDFVAEEAASEESLEELAEIVEGK.

Residues 233–255 (DFVAEEAASEESLEELAEIVEGK) are disordered.

Belongs to the universal ribosomal protein uS2 family.

The sequence is that of Small ribosomal subunit protein uS2 from Lactococcus lactis subsp. cremoris (strain SK11).